The chain runs to 238 residues: Large ribosomal subunit protein uL5c (238 aa).

It belongs to the universal ribosomal protein uL5 family. Part of the 50S ribosomal subunit; contacts the 5S rRNA.

The protein resides in the plastid. It is found in the chloroplast. In terms of biological role, binds 5S rRNA, forms part of the central protuberance of the 50S subunit. This Phaeodactylum tricornutum (strain CCAP 1055/1) protein is Large ribosomal subunit protein uL5c (rpl5).